A 390-amino-acid chain; its full sequence is Succinate--CoA ligase [ADP-forming] subunit beta (390 aa).

Residues 9–245 form the ATP-grasp domain; it reads KELLSRYGLP…KSQENEREVK (237 aa). ATP is bound by residues Lys46, 53–55, Glu100, Tyr103, and Glu108; that span reads GRG. Mg(2+) is bound by residues Asn200 and Asp214. Substrate contacts are provided by residues Asn265 and 322 to 324; that span reads GIV.

It belongs to the succinate/malate CoA ligase beta subunit family. In terms of assembly, heterotetramer of two alpha and two beta subunits. Mg(2+) is required as a cofactor.

The enzyme catalyses succinate + ATP + CoA = succinyl-CoA + ADP + phosphate. It carries out the reaction GTP + succinate + CoA = succinyl-CoA + GDP + phosphate. It functions in the pathway carbohydrate metabolism; tricarboxylic acid cycle; succinate from succinyl-CoA (ligase route): step 1/1. Its function is as follows. Succinyl-CoA synthetase functions in the citric acid cycle (TCA), coupling the hydrolysis of succinyl-CoA to the synthesis of either ATP or GTP and thus represents the only step of substrate-level phosphorylation in the TCA. The beta subunit provides nucleotide specificity of the enzyme and binds the substrate succinate, while the binding sites for coenzyme A and phosphate are found in the alpha subunit. This is Succinate--CoA ligase [ADP-forming] subunit beta from Chromobacterium violaceum (strain ATCC 12472 / DSM 30191 / JCM 1249 / CCUG 213 / NBRC 12614 / NCIMB 9131 / NCTC 9757 / MK).